A 175-amino-acid chain; its full sequence is NADH-ubiquinone oxidoreductase chain 6 (175 aa).

Helical transmembrane passes span 1 to 21 (MMIYIGFILSIVFVISFVGFS), 25 to 45 (SPIYGGLVLIVSGGVGCGIVM), 47 to 67 (FGGSFLGLMVFLIYLGGMLVV), 88 to 108 (TVLSTFILGVLMEAMLVLYMF), and 149 to 169 (YGVWIIIVTGWSLFVGVLVVL).

The protein belongs to the complex I subunit 6 family. Core subunit of respiratory chain NADH dehydrogenase (Complex I) which is composed of 45 different subunits.

The protein localises to the mitochondrion inner membrane. The catalysed reaction is a ubiquinone + NADH + 5 H(+)(in) = a ubiquinol + NAD(+) + 4 H(+)(out). Its function is as follows. Core subunit of the mitochondrial membrane respiratory chain NADH dehydrogenase (Complex I) which catalyzes electron transfer from NADH through the respiratory chain, using ubiquinone as an electron acceptor. Essential for the catalytic activity and assembly of complex I. The polypeptide is NADH-ubiquinone oxidoreductase chain 6 (MT-ND6) (Rhinoceros unicornis (Greater Indian rhinoceros)).